The sequence spans 343 residues: Transcription factor BPE (343 aa).

A bHLH domain is found at 142–192; it reads QATDSHSLAERARREKISERMKILQDLVPGCNKVIGKALVLDEIINYIQSL.

As to quaternary structure, homodimer. In terms of tissue distribution, specifically expressed in flowers, mostly in petals, inflorescence and flower buds. Expressed ubiquitously (leaves, flowers and stems).

Its subcellular location is the nucleus. In terms of biological role, involved in the control of petal size, by interfering with postmitotic cell expansion to limit final petal cell size. The protein is Transcription factor BPE (BPE) of Arabidopsis thaliana (Mouse-ear cress).